A 119-amino-acid chain; its full sequence is MPKGKKEKVERRQRIHDSIRESMFGTSVRPRLSVYRSNEHIYAQLVDDMEGHTLTSASTLADDVEGETPTEESRSVGELLAERAEDAGIDKAVFDRGGYKYQGRVRALAEGARDGGLQL.

A disordered region spans residues 54–76; the sequence is LTSASTLADDVEGETPTEESRSV.

The protein belongs to the universal ribosomal protein uL18 family. Part of the 50S ribosomal subunit; part of the 5S rRNA/L5/L18/L25 subcomplex. Contacts the 5S and 23S rRNAs.

Its function is as follows. This is one of the proteins that bind and probably mediate the attachment of the 5S RNA into the large ribosomal subunit, where it forms part of the central protuberance. The sequence is that of Large ribosomal subunit protein uL18 from Salinibacter ruber (strain DSM 13855 / M31).